Reading from the N-terminus, the 151-residue chain is 6,7-dimethyl-8-ribityllumazine synthase (151 aa).

5-amino-6-(D-ribitylamino)uracil is bound by residues Phe15, 49 to 51, and 73 to 75; these read AVE and AVI. 78–79 serves as a coordination point for (2S)-2-hydroxy-3-oxobutyl phosphate; sequence ET. The active-site Proton donor is His81. Residue Phe106 participates in 5-amino-6-(D-ribitylamino)uracil binding. A (2S)-2-hydroxy-3-oxobutyl phosphate-binding site is contributed by Arg120.

This sequence belongs to the DMRL synthase family. As to quaternary structure, forms an icosahedral capsid composed of 60 subunits, arranged as a dodecamer of pentamers.

The enzyme catalyses (2S)-2-hydroxy-3-oxobutyl phosphate + 5-amino-6-(D-ribitylamino)uracil = 6,7-dimethyl-8-(1-D-ribityl)lumazine + phosphate + 2 H2O + H(+). The protein operates within cofactor biosynthesis; riboflavin biosynthesis; riboflavin from 2-hydroxy-3-oxobutyl phosphate and 5-amino-6-(D-ribitylamino)uracil: step 1/2. Functionally, catalyzes the formation of 6,7-dimethyl-8-ribityllumazine by condensation of 5-amino-6-(D-ribitylamino)uracil with 3,4-dihydroxy-2-butanone 4-phosphate. This is the penultimate step in the biosynthesis of riboflavin. This Coxiella burnetii (strain CbuG_Q212) (Coxiella burnetii (strain Q212)) protein is 6,7-dimethyl-8-ribityllumazine synthase.